The following is a 24-amino-acid chain: 60 kDa chaperonin, mitochondrial (24 aa).

This sequence belongs to the chaperonin (HSP60) family. As to quaternary structure, forms a single seven-member ring complex, in tight association with the p63 protein. Testis.

Its subcellular location is the mitochondrion. Functionally, implicated in mitochondrial protein import and macromolecular assembly. May facilitate the correct folding of imported proteins. May also prevent misfolding and promote the refolding and proper assembly of unfolded polypeptides generated under stress conditions in the mitochondrial matrix. The protein is 60 kDa chaperonin, mitochondrial of Heliothis virescens (Tobacco budworm moth).